Here is a 518-residue protein sequence, read N- to C-terminus: Cytokinin hydroxylase (518 aa).

Residues 1 to 21 (MLLTILKSLLVIFVTTILRVL) traverse the membrane as a helical segment. Residue cysteine 464 participates in heme binding.

The protein belongs to the cytochrome P450 family. It depends on heme as a cofactor. Expressed in roots and flowers.

The protein localises to the membrane. It catalyses the reaction N(6)-(dimethylallyl)adenosine 5'-phosphate + NADPH + O2 + H(+) = 9-ribosyl-trans-zeatin 5'-phosphate + NADP(+) + H2O. It carries out the reaction N(6)-(dimethylallyl)adenosine 5'-diphosphate + NADPH + O2 + H(+) = 9-ribosyl-trans-zeatin 5'-diphosphate + NADP(+) + H2O. The catalysed reaction is N(6)-(dimethylallyl)adenosine 5'-triphosphate + NADPH + O2 + H(+) = 9-ribosyl-trans-zeatin 5'-triphosphate + NADP(+) + H2O. Functionally, cytokinin hydroxylase that catalyzes the biosynthesis of trans-zeatin via the isopentenyladenine riboside 5'-monophosphate (iPRMP)-dependent pathway. Can use isopentenyladenosine-5'-monophosphate, isopentenyladenosine-5'-diphosphate and isopentenyladenosine-5'-triphosphate as substrate. The protein is Cytokinin hydroxylase (CYP735A1) of Arabidopsis thaliana (Mouse-ear cress).